The chain runs to 354 residues: Neutral protease 2 homolog MEP3 (354 aa).

The N-terminal stretch at 1-19 (MHFTSSLLALVALTTQALA) is a signal peptide. The propeptide occupies 20–179 (FPLNDLPKRD…QSAIPKLEKR (160 aa)). 2 cysteine pairs are disulfide-bonded: Cys186–Cys256 and Cys263–Cys281. Residue His305 participates in Zn(2+) binding. Glu306 is a catalytic residue. His309 and Asp320 together coordinate Zn(2+).

This sequence belongs to the peptidase M35 family. Zn(2+) serves as cofactor.

Its subcellular location is the secreted. It carries out the reaction Preferential cleavage of bonds with hydrophobic residues in P1'. Also 3-Asn-|-Gln-4 and 8-Gly-|-Ser-9 bonds in insulin B chain.. Functionally, secreted metalloproteinase that allows assimilation of proteinaceous substrates. Shows high activities on basic nuclear substrates such as histone and protamine. May be involved in virulence. The chain is Neutral protease 2 homolog MEP3 (MEP3) from Coccidioides posadasii (strain C735) (Valley fever fungus).